We begin with the raw amino-acid sequence, 377 residues long: GTP 3',8-cyclase (377 aa).

The disordered stretch occupies residues Met-1–His-29. The 227-residue stretch at Arg-45–Arg-271 folds into the Radical SAM core domain. Residue Arg-54 participates in GTP binding. [4Fe-4S] cluster is bound by residues Cys-61 and Cys-65. Tyr-67 is a binding site for S-adenosyl-L-methionine. Cys-68 provides a ligand contact to [4Fe-4S] cluster. Arg-105 contributes to the GTP binding site. S-adenosyl-L-methionine is bound at residue Gly-109. Thr-140 provides a ligand contact to GTP. S-adenosyl-L-methionine is bound at residue Ser-164. Lys-201 provides a ligand contact to GTP. Met-235 is a binding site for S-adenosyl-L-methionine. [4Fe-4S] cluster-binding residues include Cys-304 and Cys-307. GTP is bound at residue Arg-309 to Arg-311. Cys-321 lines the [4Fe-4S] cluster pocket.

It belongs to the radical SAM superfamily. MoaA family. Monomer and homodimer. [4Fe-4S] cluster is required as a cofactor.

The catalysed reaction is GTP + AH2 + S-adenosyl-L-methionine = (8S)-3',8-cyclo-7,8-dihydroguanosine 5'-triphosphate + 5'-deoxyadenosine + L-methionine + A + H(+). Its pathway is cofactor biosynthesis; molybdopterin biosynthesis. Its function is as follows. Catalyzes the cyclization of GTP to (8S)-3',8-cyclo-7,8-dihydroguanosine 5'-triphosphate. This Corynebacterium glutamicum (strain R) protein is GTP 3',8-cyclase.